A 162-amino-acid polypeptide reads, in one-letter code: Protein mmf1, mitochondrial (162 aa).

This sequence belongs to the RutC family.

The protein resides in the mitochondrion. It is found in the cytoplasm. In terms of biological role, plays a role in the maintenance of mitochondrial DNA. The protein is Protein mmf1, mitochondrial (mmf1) of Schizosaccharomyces pombe (strain 972 / ATCC 24843) (Fission yeast).